The primary structure comprises 695 residues: Probable glucan endo-1,3-beta-glucosidase btgC (695 aa).

Disordered regions lie at residues 1–53, 117–140, 175–258, and 286–314; these read MSGP…THHG, RRGT…GSDN, GPAG…RSQA, and ETSY…STGS. The Cytoplasmic portion of the chain corresponds to 1–317; it reads MSGPHRTFSF…PKPSTGSRKR (317 aa). Residues 36–45 are compositionally biased toward polar residues; that stretch reads PISNMSSSPG. Residues 188–198 show a composition bias toward polar residues; sequence HLGTSNSSQRN. Residues 231–241 show a composition bias toward acidic residues; that stretch reads NPEEIADDGDD. A helical; Signal-anchor for type II membrane protein transmembrane segment spans residues 318-338; that stretch reads GWIIGAILAVIIIGAIVGGAV. At 339–695 the chain is on the extracellular side; the sequence is GGTIGHKDSG…IPDCGGKTAA (357 aa). A disordered region spans residues 346–372; sequence DSGDSASGSSASTQSASGDTDTNGDLD. Low complexity predominate over residues 349 to 366; sequence DSASGSSASTQSASGDTD. Residues Asn-415, Asn-438, and Asn-466 are each glycosylated (N-linked (GlcNAc...) asparagine). Residue Glu-498 is the Proton donor of the active site. Catalysis depends on Glu-597, which acts as the Nucleophile. An N-linked (GlcNAc...) asparagine glycan is attached at Asn-642.

Belongs to the glycosyl hydrolase 17 family.

It localises to the cell membrane. It catalyses the reaction Hydrolysis of (1-&gt;3)-beta-D-glucosidic linkages in (1-&gt;3)-beta-D-glucans.. In terms of biological role, glucanases play a role in cell expansion during growth, in cell-cell fusion during mating, and in spore release during sporulation. This enzyme may be involved in beta-glucan degradation. Active on laminarin and lichenan. The sequence is that of Probable glucan endo-1,3-beta-glucosidase btgC (btgC) from Aspergillus clavatus (strain ATCC 1007 / CBS 513.65 / DSM 816 / NCTC 3887 / NRRL 1 / QM 1276 / 107).